Here is a 324-residue protein sequence, read N- to C-terminus: N-acetylmuramoyl-L-alanine amidase sle1 (324 aa).

A signal peptide spans 1-25; the sequence is MQKKYITAIIGTTALSALASTHAQA. LysM domains follow at residues 27–70, 84–127, and 147–190; these read TTHT…VLKV, TVYT…KLKV, and ATYT…KLKV. Positions 200–324 constitute a Peptidase C51 domain; that stretch reads SNNTRSNGGY…YQVRNYKFIH (125 aa).

The protein resides in the secreted. The protein localises to the cell surface. The enzyme catalyses Hydrolyzes the link between N-acetylmuramoyl residues and L-amino acid residues in certain cell-wall glycopeptides.. Its function is as follows. Peptidoglycan hydrolase involved in the splitting of the septum during cell division. The chain is N-acetylmuramoyl-L-alanine amidase sle1 (sle1) from Staphylococcus epidermidis (strain ATCC 12228 / FDA PCI 1200).